The sequence spans 158 residues: NAD(P)H-quinone oxidoreductase subunit J, chloroplastic (158 aa).

The protein belongs to the complex I 30 kDa subunit family. In terms of assembly, NDH is composed of at least 16 different subunits, 5 of which are encoded in the nucleus.

Its subcellular location is the plastid. The protein localises to the chloroplast thylakoid membrane. It catalyses the reaction a plastoquinone + NADH + (n+1) H(+)(in) = a plastoquinol + NAD(+) + n H(+)(out). It carries out the reaction a plastoquinone + NADPH + (n+1) H(+)(in) = a plastoquinol + NADP(+) + n H(+)(out). NDH shuttles electrons from NAD(P)H:plastoquinone, via FMN and iron-sulfur (Fe-S) centers, to quinones in the photosynthetic chain and possibly in a chloroplast respiratory chain. The immediate electron acceptor for the enzyme in this species is believed to be plastoquinone. Couples the redox reaction to proton translocation, and thus conserves the redox energy in a proton gradient. This chain is NAD(P)H-quinone oxidoreductase subunit J, chloroplastic, found in Spinacia oleracea (Spinach).